Consider the following 631-residue polypeptide: MNRLGRLPLPLPPSVCLFCRFRATASLPSSLQATRSMATARLRRRVARMTLSPDVAKPSVVKKTRGDKERFGPFAGMNQTEARIRETPRARSRAAQKRSGEPEEDSQKESPLYKALKMQTALTPIPYGRRAAIKAKIADITSFDQFQLLPVVRNSISSQALPGLVDVTPTPIQRLAIPRLLEEPKTEKKPTKADDDEPRYDQYLLAAETGSGKTLAYLLPVVDAVKREEARDKELEKKEQEEKAREREERLKNRAFDIEPEIPPLSNAGRPRAIILVPTSELVAQVGVKVKALSHTVKYRSGMISSNFTPRRIKNTLFHPDGIDILVATPHLLASIAKTEPYVLSRVSHLVLDEADSLLDRSFAPTTTEIISKAAPSLRKLILCSATIPRSLDNLLRKRYPDIKRLTTPNLHAIPRRVQLGVVDIEKDPYRGNRSLACADVIWSIGKAGDAESEGPYASYVAPKTKKILVFVNEREEADEVAQFLRSKGIDAQSLSRDSDARKQEEILAEFTEAPPPPSPDEILLAQKKRRYEDAIPFEMPEKANQGSSRRLANTKVLVTTDLASRGIDTLAVKTVILYHVPHTTIDFIHRLGRLGRMGKRGRGVVLVGKKDRKDVVKEVREGMFRGQALI.

A mitochondrion-targeting transit peptide spans M1 to R45. A disordered region spans residues K68–L112. Residues R98–K108 are compositionally biased toward basic and acidic residues. The Q motif signature appears at T141–R174. The segment covering L180 to A193 has biased composition (basic and acidic residues). Positions L180–R199 are disordered. Positions D194–L406 constitute a Helicase ATP-binding domain. A207–T214 lines the ATP pocket. The segment at E229–E249 is disordered. Residues D353–D356 carry the DEAD box motif. Residues G455–I631 form the Helicase C-terminal domain.

This sequence belongs to the DEAD box helicase family. MRH4 subfamily.

Its subcellular location is the mitochondrion. The catalysed reaction is ATP + H2O = ADP + phosphate + H(+). Functionally, ATP-binding RNA helicase involved in mitochondrial RNA metabolism. Required for maintenance of mitochondrial DNA. In Aspergillus fumigatus (strain ATCC MYA-4609 / CBS 101355 / FGSC A1100 / Af293) (Neosartorya fumigata), this protein is ATP-dependent RNA helicase mrh4, mitochondrial (mrh4).